We begin with the raw amino-acid sequence, 134 residues long: Large ribosomal subunit protein uL18 (134 aa).

It belongs to the universal ribosomal protein uL18 family. Part of the 50S ribosomal subunit; part of the 5S rRNA/L5/L18/L25 subcomplex. Contacts the 5S and 23S rRNAs.

Its function is as follows. This is one of the proteins that bind and probably mediate the attachment of the 5S RNA into the large ribosomal subunit, where it forms part of the central protuberance. This chain is Large ribosomal subunit protein uL18, found in Corynebacterium efficiens (strain DSM 44549 / YS-314 / AJ 12310 / JCM 11189 / NBRC 100395).